Here is a 610-residue protein sequence, read N- to C-terminus: MSEIFDAKAFLKTVTSQPGVYRMYDAGGTVIYVGKAKDLKKRLSSYFRSNLASRKTEALVAQIQHIDVTVTHTETEALLLEHNYIKLYQPRYNVLLRDDKSYPFIFLSGDTHPRLAMHRGAKHAKGEYFGPFPNGYAVRETLALLQKIFPIRQCENSVYRNRSRPCLQYQIGRCLGPCVAGLVSEEEYAQQVEYVRLFLSGKDDQVLTQLIARMEKASQDLAFEEAARIRDQIQAVRRVTERQFVSNAGDDLDVIGVAFDAGMACVHVLFIRQGKVLGSRSYFPKVPGGTELGEVVETFVGQFYLQGSQMRTLPGEILLDFNLSDKTLLADSLSELAGRRIHVQTKPRGDRARYLKLARTNAATALITKLSQQSTITQRLTALAAVLKLPAIKRMECFDISHTMGEQTVASCVVFDANGPLRAEYRRYNIAGITPGDDYAAMNQVLRRRYGKAIEESKIPDVILIDGGKGQLAQAKAVFAELDVPWDKHRPLLLGVAKGADRKAGLETLFFEPEGEGFSLPPDSPALHVIQHIRDESHDHAIGGHRKKRAKVKNTSTLETIEGVGPKRRQMLLKYMGGLQGLRNASVEEIAKVPGISQGLAEKIFWSLKH.

A GIY-YIG domain is found at 16 to 94 (SQPGVYRMYD…IKLYQPRYNV (79 aa)). Residues 204-239 (DQVLTQLIARMEKASQDLAFEEAARIRDQIQAVRRV) form the UVR domain.

The protein belongs to the UvrC family. As to quaternary structure, interacts with UvrB in an incision complex.

It is found in the cytoplasm. Its function is as follows. The UvrABC repair system catalyzes the recognition and processing of DNA lesions. UvrC both incises the 5' and 3' sides of the lesion. The N-terminal half is responsible for the 3' incision and the C-terminal half is responsible for the 5' incision. The polypeptide is UvrABC system protein C (Salmonella paratyphi C (strain RKS4594)).